The chain runs to 84 residues: Cell division topological specificity factor (84 aa).

Belongs to the MinE family.

Functionally, prevents the cell division inhibition by proteins MinC and MinD at internal division sites while permitting inhibition at polar sites. This ensures cell division at the proper site by restricting the formation of a division septum at the midpoint of the long axis of the cell. This chain is Cell division topological specificity factor, found in Ralstonia pickettii (strain 12J).